The following is a 325-amino-acid chain: Homoserine O-succinyltransferase (325 aa).

Cysteine 142 functions as the Acyl-thioester intermediate in the catalytic mechanism. Residues lysine 163 and serine 191 each contribute to the substrate site. The active-site Proton acceptor is the histidine 234. The active site involves glutamate 236. Arginine 248 lines the substrate pocket.

It belongs to the MetA family.

It localises to the cytoplasm. It carries out the reaction L-homoserine + succinyl-CoA = O-succinyl-L-homoserine + CoA. Its pathway is amino-acid biosynthesis; L-methionine biosynthesis via de novo pathway; O-succinyl-L-homoserine from L-homoserine: step 1/1. Functionally, transfers a succinyl group from succinyl-CoA to L-homoserine, forming succinyl-L-homoserine. The polypeptide is Homoserine O-succinyltransferase (Bradyrhizobium japonicum).